The chain runs to 266 residues: Glycine--tRNA ligase beta subunit (266 aa).

Belongs to the class-II aminoacyl-tRNA synthetase family. In terms of assembly, tetramer of two alpha and two beta subunits.

The protein resides in the cytoplasm. It carries out the reaction tRNA(Gly) + glycine + ATP = glycyl-tRNA(Gly) + AMP + diphosphate. This is Glycine--tRNA ligase beta subunit (glyS) from Moraxella catarrhalis (Branhamella catarrhalis).